Reading from the N-terminus, the 159-residue chain is MIEGVMKEGFITTSYDSVVNWAKTGSLWPMTFGLACCAVEMMHAAAARYDLGRFGAEVFRASPRQSDLMIVAGTLCNKMAPALRKVYDQMAEPRWVISMGSCANGGGYYHYSYSVVRGCDRIVPVDVYVPGCPPTAEALIYGIIQLQQKIRRTHTIARA.

Residues cysteine 36, cysteine 37, cysteine 102, and cysteine 132 each coordinate [4Fe-4S] cluster.

It belongs to the complex I 20 kDa subunit family. NDH-1 is composed of 14 different subunits. Subunits NuoB, C, D, E, F, and G constitute the peripheral sector of the complex. Requires [4Fe-4S] cluster as cofactor.

It localises to the cell inner membrane. The enzyme catalyses a quinone + NADH + 5 H(+)(in) = a quinol + NAD(+) + 4 H(+)(out). Its function is as follows. NDH-1 shuttles electrons from NADH, via FMN and iron-sulfur (Fe-S) centers, to quinones in the respiratory chain. The immediate electron acceptor for the enzyme in this species is believed to be ubiquinone. Couples the redox reaction to proton translocation (for every two electrons transferred, four hydrogen ions are translocated across the cytoplasmic membrane), and thus conserves the redox energy in a proton gradient. The chain is NADH-quinone oxidoreductase subunit B from Acidovorax ebreus (strain TPSY) (Diaphorobacter sp. (strain TPSY)).